The primary structure comprises 358 residues: Phosphoserine aminotransferase (358 aa).

Arg41 serves as a coordination point for L-glutamate. Residues 75–76 (AR), Trp101, Thr150, Asp170, and Gln193 contribute to the pyridoxal 5'-phosphate site. The residue at position 194 (Lys194) is an N6-(pyridoxal phosphate)lysine. 235–236 (NT) is a pyridoxal 5'-phosphate binding site.

Belongs to the class-V pyridoxal-phosphate-dependent aminotransferase family. SerC subfamily. In terms of assembly, homodimer. Pyridoxal 5'-phosphate is required as a cofactor.

It localises to the cytoplasm. It catalyses the reaction O-phospho-L-serine + 2-oxoglutarate = 3-phosphooxypyruvate + L-glutamate. The enzyme catalyses 4-(phosphooxy)-L-threonine + 2-oxoglutarate = (R)-3-hydroxy-2-oxo-4-phosphooxybutanoate + L-glutamate. Its pathway is amino-acid biosynthesis; L-serine biosynthesis; L-serine from 3-phospho-D-glycerate: step 2/3. It functions in the pathway cofactor biosynthesis; pyridoxine 5'-phosphate biosynthesis; pyridoxine 5'-phosphate from D-erythrose 4-phosphate: step 3/5. Catalyzes the reversible conversion of 3-phosphohydroxypyruvate to phosphoserine and of 3-hydroxy-2-oxo-4-phosphonooxybutanoate to phosphohydroxythreonine. In Histophilus somni (strain 129Pt) (Haemophilus somnus), this protein is Phosphoserine aminotransferase.